Consider the following 430-residue polypeptide: Adenylosuccinate synthetase (430 aa).

GTP-binding positions include 12–18 (GDEGKGK) and 40–42 (GHT). Asp13 functions as the Proton acceptor in the catalytic mechanism. The Mg(2+) site is built by Asp13 and Gly40. IMP-binding positions include 13 to 16 (DEGK), 38 to 41 (NAGH), Thr128, Arg142, Gln223, Thr238, and Arg302. His41 functions as the Proton donor in the catalytic mechanism. A substrate-binding site is contributed by 298 to 304 (TTTGRPR). Residues Arg304, 330-332 (SID), and 412-414 (SVG) each bind GTP.

It belongs to the adenylosuccinate synthetase family. Homodimer. Mg(2+) is required as a cofactor.

Its subcellular location is the cytoplasm. It carries out the reaction IMP + L-aspartate + GTP = N(6)-(1,2-dicarboxyethyl)-AMP + GDP + phosphate + 2 H(+). It functions in the pathway purine metabolism; AMP biosynthesis via de novo pathway; AMP from IMP: step 1/2. Functionally, plays an important role in the de novo pathway of purine nucleotide biosynthesis. Catalyzes the first committed step in the biosynthesis of AMP from IMP. This is Adenylosuccinate synthetase from Streptococcus pyogenes serotype M4 (strain MGAS10750).